A 645-amino-acid chain; its full sequence is Acetyl-coenzyme A synthetase 2 (645 aa).

CoA is bound by residues 190–193, T308, and N332; that span reads RGGK. Residues 384 to 386, 408 to 413, D497, and R512 contribute to the ATP site; these read GEP and DTWWQT. Residue S520 coordinates CoA. Residue R523 participates in ATP binding. Mg(2+) is bound by residues V534, H536, and V539. N6-acetyllysine is present on K606.

The protein belongs to the ATP-dependent AMP-binding enzyme family. It depends on Mg(2+) as a cofactor. Post-translationally, acetylated. Deacetylation by the SIR2-homolog deacetylase activates the enzyme.

The enzyme catalyses acetate + ATP + CoA = acetyl-CoA + AMP + diphosphate. Catalyzes the conversion of acetate into acetyl-CoA (AcCoA), an essential intermediate at the junction of anabolic and catabolic pathways. AcsA undergoes a two-step reaction. In the first half reaction, AcsA combines acetate with ATP to form acetyl-adenylate (AcAMP) intermediate. In the second half reaction, it can then transfer the acetyl group from AcAMP to the sulfhydryl group of CoA, forming the product AcCoA. The polypeptide is Acetyl-coenzyme A synthetase 2 (Pseudomonas aeruginosa (strain ATCC 15692 / DSM 22644 / CIP 104116 / JCM 14847 / LMG 12228 / 1C / PRS 101 / PAO1)).